A 347-amino-acid polypeptide reads, in one-letter code: Ferrochelatase (347 aa).

Fe cation-binding residues include His193 and Glu273.

The protein belongs to the ferrochelatase family.

The protein localises to the cytoplasm. The enzyme catalyses heme b + 2 H(+) = protoporphyrin IX + Fe(2+). Its pathway is porphyrin-containing compound metabolism; protoheme biosynthesis; protoheme from protoporphyrin-IX: step 1/1. In terms of biological role, catalyzes the ferrous insertion into protoporphyrin IX. The sequence is that of Ferrochelatase from Rickettsia canadensis (strain McKiel).